Consider the following 480-residue polypeptide: Type VI lipase adapter protein Tla3 (480 aa).

The interval Ile410–Gly458 is disordered.

As to quaternary structure, interacts with the Tle3 toxin on one side and with the H2-T6SS component VgrG2b on the other side.

It localises to the cytoplasm. Functionally, adapter protein that targets and loads the Tle3 toxin onto the H2 type VI secretion system (H2-T6SS) machinery through an interaction with the TTR domain of VgrG2b. Seems specific for Tle3. The protein is Type VI lipase adapter protein Tla3 of Pseudomonas aeruginosa (strain ATCC 15692 / DSM 22644 / CIP 104116 / JCM 14847 / LMG 12228 / 1C / PRS 101 / PAO1).